A 566-amino-acid polypeptide reads, in one-letter code: Unconventional myosin-VIIa (566 aa).

Residues 67–566 (MMEDMIQHLG…AGVVYYESQG (500 aa)) enclose the Myosin motor domain. Residue 160–167 (GESGAGKT) participates in ATP binding.

It belongs to the TRAFAC class myosin-kinesin ATPase superfamily. Myosin family. As to quaternary structure, might homodimerize in a two headed molecule through the formation of a coiled-coil rod. Identified in a complex with USH1C and USH1G. Interacts with MYRIP. Interacts with RPE65. Interacts with CIB2. May interact with CALM. Interacts with WHRN. Interacts with PLEKHB1 (via PH domain). Interacts with PCDH15. Interacts with TWF2. Interacts with USH1G. Interacts with MYH9. Interacts (via MyTH4-FERM domains) with cytoplasmic regions of ADGRV1 and USH2A. Interacts with PDZD7 (via MyTH4-FERM domains). Interacts with CALML4.

It is found in the cytoplasm. The protein resides in the cell cortex. The protein localises to the cytoskeleton. It localises to the synapse. Functionally, myosins are actin-based motor molecules with ATPase activity. Unconventional myosins serve in intracellular movements. Their highly divergent tails bind to membranous compartments, which are then moved relative to actin filaments. In the retina, plays an important role in the renewal of the outer photoreceptor disks. Plays an important role in the distribution and migration of retinal pigment epithelial (RPE) melanosomes and phagosomes, and in the regulation of opsin transport in retinal photoreceptors. In the inner ear, plays an important role in differentiation, morphogenesis and organization of cochlear hair cell bundles. Motor protein that is a part of the functional network formed by USH1C, USH1G, CDH23 and MYO7A that mediates mechanotransduction in cochlear hair cells. Required for normal hearing. Involved in hair-cell vesicle trafficking of aminoglycosides, which are known to induce ototoxicity. This chain is Unconventional myosin-VIIa (MYO7A), found in Sus scrofa (Pig).